The chain runs to 449 residues: Histidinol dehydrogenase (449 aa).

Residues Tyr-135, Gln-199, and Asn-229 each coordinate NAD(+). Residues Thr-252, Gln-274, and His-277 each coordinate substrate. Gln-274 and His-277 together coordinate Zn(2+). Active-site proton acceptor residues include Glu-343 and His-344. 4 residues coordinate substrate: His-344, Asp-377, Glu-431, and His-436. Asp-377 is a binding site for Zn(2+). His-436 is a Zn(2+) binding site.

The protein belongs to the histidinol dehydrogenase family. Zn(2+) is required as a cofactor.

It catalyses the reaction L-histidinol + 2 NAD(+) + H2O = L-histidine + 2 NADH + 3 H(+). It participates in amino-acid biosynthesis; L-histidine biosynthesis; L-histidine from 5-phospho-alpha-D-ribose 1-diphosphate: step 9/9. Functionally, catalyzes the sequential NAD-dependent oxidations of L-histidinol to L-histidinaldehyde and then to L-histidine. This Corynebacterium diphtheriae (strain ATCC 700971 / NCTC 13129 / Biotype gravis) protein is Histidinol dehydrogenase.